Consider the following 391-residue polypeptide: MAVKKRSIFEEVGQGAKAPVPQGGSIDRGHGGARRGIRLWLMALFLLVMAMIVVGGLTRLTESGLSITEWRPVTGAVPPLNETQWAAEFDKYRDSPQYRLMNAGMTLAEFQRIYWWEWGHRQLGRVIGLVWAVGFLGFLAARRIPRGWWPRLLALGALGGLQGGIGWWMVASGLEGDKVTVESTRLATHLGLAFIILGLIAWQALLLGRSESDLLQARRQKEGRLVTLTTVLIGVAFLQIVLGALVAGIDAGRGFPTWPDMNGTFLPADMFYVPGVETDWRNPAWWLGLLQNPGFVQFLHRMAGYALAALGLIFWIFGRRSRHRATRGAFDLLAMALLAQILLGVGTVLSAAEWQVAIAHQVGAVVIWVLILHARHLALYPRVGSIRKGTL.

Transmembrane regions (helical) follow at residues 37 to 57, 121 to 141, 152 to 172, 186 to 206, 229 to 249, 298 to 318, 332 to 352, and 354 to 374; these read IRLWLMALFLLVMAMIVVGGL, RQLGRVIGLVWAVGFLGFLAA, LLALGALGGLQGGIGWWMVAS, LATHLGLAFIILGLIAWQALL, TTVLIGVAFLQIVLGALVAGI, FLHRMAGYALAALGLIFWIFG, LLAMALLAQILLGVGTVLSAA, and WQVAIAHQVGAVVIWVLILHA. Heme is bound at residue H300. H360 lines the heme pocket.

This sequence belongs to the COX15/CtaA family. Type 2 subfamily. In terms of assembly, interacts with CtaB. Heme b serves as cofactor.

The protein resides in the cell membrane. It carries out the reaction Fe(II)-heme o + 2 A + H2O = Fe(II)-heme a + 2 AH2. It functions in the pathway porphyrin-containing compound metabolism; heme A biosynthesis; heme A from heme O: step 1/1. Its function is as follows. Catalyzes the conversion of heme O to heme A by two successive hydroxylations of the methyl group at C8. The first hydroxylation forms heme I, the second hydroxylation results in an unstable dihydroxymethyl group, which spontaneously dehydrates, resulting in the formyl group of heme A. The sequence is that of Heme A synthase from Cereibacter sphaeroides (strain KD131 / KCTC 12085) (Rhodobacter sphaeroides).